The chain runs to 520 residues: GMP synthase [glutamine-hydrolyzing] (520 aa).

The Glutamine amidotransferase type-1 domain maps to 12 to 205 (KIIVLDYGSQ…AISICGGRGD (194 aa)). Cys-89 serves as the catalytic Nucleophile. Residues His-179 and Glu-181 contribute to the active site. The region spanning 206–395 (WSMDNFIDMQ…LGMPDEVVWR (190 aa)) is the GMPS ATP-PPase domain. 233-239 (SGGVDSS) contributes to the ATP binding site.

In terms of assembly, homodimer.

The catalysed reaction is XMP + L-glutamine + ATP + H2O = GMP + L-glutamate + AMP + diphosphate + 2 H(+). Its pathway is purine metabolism; GMP biosynthesis; GMP from XMP (L-Gln route): step 1/1. In terms of biological role, catalyzes the synthesis of GMP from XMP. The polypeptide is GMP synthase [glutamine-hydrolyzing] (Streptococcus equi subsp. equi (strain 4047)).